The following is a 397-amino-acid chain: Acid extracellular protease (397 aa).

A signal peptide spans 1 to 17 (MQFSLATLTTLLAFVAA). One can recognise a Peptidase A1 domain in the interval 61–378 (YQVQISLGGQ…DLERDEVSIA (318 aa)). The active site involves Asp-77. Asn-88 carries N-linked (GlcNAc...) asparagine glycosylation. Cys-93 and Cys-100 are oxidised to a cystine. Residue Asp-264 is part of the active site. A disulfide bond links Cys-303 and Cys-343. N-linked (GlcNAc...) asparagine glycosylation is found at Asn-310 and Asn-314.

It belongs to the peptidase A1 family.

It localises to the secreted. This is Acid extracellular protease (AXP1) from Yarrowia lipolytica (strain CLIB 122 / E 150) (Yeast).